The primary structure comprises 947 residues: MSKIPVFKGSFKSWLAKNDEKPAKSVLLEPKYRDHHEKIRNKENMEEGEKPVFVSMANPQPTREDYERYDEDRRLKDKARDLRIARRRNSATPEASPSSDQYFTPEPADDEFVTPSTSKKSQKPRSSDATPVSSKPPRYLPRTPLSEQYTSCLSRKMEENFSRMQELMISGHSPHEARQQTIQESSEQLEPRAKVTRSSSQPPPIDTLKPRVPRIESPLVKKTTETPIRRTSYVDTLVATHQIQLQYSDRVVVGVERQMTKLESIKNLAAANRSPIIAEEAKKRRNEAEAVRKLIEVETQNAKKRAVIQELKDRIDKLTQAQLAIHQLVSSQPFSGDPYNQRLLRSIDNWMALPFREFDIQTAREMLELARKMKITIDHFRNVATLHRNSKSLNRSLNTSRKSIAVKINPSSQLNQQSSSDAAPPPSMREASTQMTSRLAESAMTQTSPRRIGVEPLDLSQLLEKHNSSSQTTPPVVEPVLAEVSAEPQRPPVTLSMTAPVSTIAEFDSMLNSISLHNESLETVAEPFSRLKTDISFPSTVEETTPRSGRVSLDSESARRLSAGLSHYLEQVKKERESMEAQESESESMELEIPVVSEVSVTTESENLEEVVSEHSDSKSPETLVASDNGEDSSGGSEDPNATQFEHEIEEHKEPEKLGLIIDPEDEQDETKRFVNHDEFEQSLEEELEPRGNNDSADDSGFLLDNSPAPRLKSIFDNLPPAAASAAVTDTPRVPAEADETTFAGMDMEEYCQREFLKEISPIMVQKAIELQDELRGVDWLTAQDVWQPPSFKDVQMEFDDNFEYFDSFSILIWSAVVDLINKNYLKFGRKMTENEEIAFEAEALKMLQTEHGPESRKSEWCTDVKMSKKLEGMMPMELDYRYDVRRGLPDAEKQKYQWQQVQMTVIAARYANKNLINEANEVYATEKEKLGQMVLESEIDATVTDV.

Disordered regions lie at residues 20–148 (EKPA…LSEQ) and 173–211 (SPHE…LKPR). Composition is skewed to basic and acidic residues over residues 30–50 (PKYR…EGEK) and 62–84 (TRED…DLRI). Polar residues-rich tracts occupy residues 90–102 (SATP…SDQY) and 179–188 (QQTIQESSEQ). The stretch at 276-320 (IIAEEAKKRRNEAEAVRKLIEVETQNAKKRAVIQELKDRIDKLTQ) forms a coiled coil. Disordered regions lie at residues 407–453 (KINP…RRIG), 575–594 (ERES…LEIP), 600–662 (SVTT…GLII), and 681–705 (EQSL…FLLD). Residues 411–422 (SSQLNQQSSSDA) show a composition bias toward low complexity. Polar residues predominate over residues 430–449 (EASTQMTSRLAESAMTQTSP). A coiled-coil region spans residues 563–591 (AGLSHYLEQVKKERESMEAQESESESMEL). Positions 580-590 (EAQESESESME) are enriched in acidic residues. The segment covering 645–657 (FEHEIEEHKEPEK) has biased composition (basic and acidic residues).

As to quaternary structure, interacts with phosphatase regulatory subunit rsa-1 and tpxl-1. May interact with spd-5. May interact with sys-1.

It localises to the cytoplasm. The protein localises to the cytoskeleton. Its subcellular location is the microtubule organizing center. It is found in the centrosome. Functionally, recruits rsa-1 and, thereby, phosphatase let-92/paa-1 complex to the centrosomes. Recruits sys-1/beta-catenin to mitotic centrosomes during the first embryonic cell divisions. The protein is Regulator of spindle assembly protein 2 of Caenorhabditis elegans.